The sequence spans 232 residues: Large ribosomal subunit protein uL1 (232 aa).

Belongs to the universal ribosomal protein uL1 family. As to quaternary structure, part of the 50S ribosomal subunit.

In terms of biological role, binds directly to 23S rRNA. The L1 stalk is quite mobile in the ribosome, and is involved in E site tRNA release. Protein L1 is also a translational repressor protein, it controls the translation of the L11 operon by binding to its mRNA. This chain is Large ribosomal subunit protein uL1, found in Xanthomonas campestris pv. campestris (strain B100).